A 230-amino-acid chain; its full sequence is UPF0173 metal-dependent hydrolase Rsph17029_0942 (230 aa).

Belongs to the UPF0173 family.

The polypeptide is UPF0173 metal-dependent hydrolase Rsph17029_0942 (Cereibacter sphaeroides (strain ATCC 17029 / ATH 2.4.9) (Rhodobacter sphaeroides)).